A 437-amino-acid chain; its full sequence is F-box/FBD/LRR-repeat protein At5g22700 (437 aa).

An F-box domain is found at 5–51; the sequence is GDRISSLPDELLCQILSNLPTKNAVTTSILSTRWRSIWLSTPVLDID. LRR repeat units lie at residues 86–113, 134–160, 161–186, 187–210, 215–240, 272–297, and 322–350; these read RDDV…EVDC, SLRL…HLEE, NIYY…TVVR, IVDI…KLVL, GWFI…SLKD, PVTF…TISG, and NARF…VLGL. An FBD domain is found at 361-406; it reads RVSSVPPCFLSSLEFVEIRSRLCRKRYVMKVARYFAKNSVMLKKFV.

This is F-box/FBD/LRR-repeat protein At5g22700 from Arabidopsis thaliana (Mouse-ear cress).